The following is a 141-amino-acid chain: Putative nickel-responsive regulator (141 aa).

Ni(2+) contacts are provided by His83, His94, His96, and Cys102.

It belongs to the transcriptional regulatory CopG/NikR family. Requires Ni(2+) as cofactor.

Functionally, transcriptional regulator. This is Putative nickel-responsive regulator from Methanopyrus kandleri (strain AV19 / DSM 6324 / JCM 9639 / NBRC 100938).